Here is a 173-residue protein sequence, read N- to C-terminus: dCTP deaminase, dUMP-forming (173 aa).

DCTP contacts are provided by residues 93-98 (RSSTGR), aspartate 111, 119-121 (TLE), glutamine 138, and tyrosine 151. The active-site Proton donor/acceptor is the glutamate 121.

This sequence belongs to the dCTP deaminase family. In terms of assembly, homotrimer.

It carries out the reaction dCTP + 2 H2O = dUMP + NH4(+) + diphosphate. It participates in pyrimidine metabolism; dUMP biosynthesis; dUMP from dCTP: step 1/1. Its function is as follows. Bifunctional enzyme that catalyzes both the deamination of dCTP to dUTP and the hydrolysis of dUTP to dUMP without releasing the toxic dUTP intermediate. This chain is dCTP deaminase, dUMP-forming, found in Clostridium botulinum (strain Eklund 17B / Type B).